A 602-amino-acid chain; its full sequence is Chaperone protein dnaK (602 aa).

This sequence belongs to the heat shock protein 70 family.

It localises to the plastid. The protein localises to the chloroplast. Its function is as follows. Acts as a chaperone. The polypeptide is Chaperone protein dnaK (Thalassiosira pseudonana (Marine diatom)).